The following is a 273-amino-acid chain: Hydroxyethylthiazole kinase (273 aa).

Met47 contacts substrate. Arg123 and Thr169 together coordinate ATP. Position 196 (Gly196) interacts with substrate.

Belongs to the Thz kinase family. Requires Mg(2+) as cofactor.

The catalysed reaction is 5-(2-hydroxyethyl)-4-methylthiazole + ATP = 4-methyl-5-(2-phosphooxyethyl)-thiazole + ADP + H(+). Its pathway is cofactor biosynthesis; thiamine diphosphate biosynthesis; 4-methyl-5-(2-phosphoethyl)-thiazole from 5-(2-hydroxyethyl)-4-methylthiazole: step 1/1. Catalyzes the phosphorylation of the hydroxyl group of 4-methyl-5-beta-hydroxyethylthiazole (THZ). This is Hydroxyethylthiazole kinase from Desulfotalea psychrophila (strain LSv54 / DSM 12343).